Here is a 510-residue protein sequence, read N- to C-terminus: Histidine ammonia-lyase (510 aa).

The segment at residues 143 to 145 is a cross-link (5-imidazolinone (Ala-Gly)); the sequence is ASG. Ser144 carries the 2,3-didehydroalanine (Ser) modification.

Belongs to the PAL/histidase family. In terms of processing, contains an active site 4-methylidene-imidazol-5-one (MIO), which is formed autocatalytically by cyclization and dehydration of residues Ala-Ser-Gly.

It is found in the cytoplasm. It carries out the reaction L-histidine = trans-urocanate + NH4(+). It functions in the pathway amino-acid degradation; L-histidine degradation into L-glutamate; N-formimidoyl-L-glutamate from L-histidine: step 1/3. The protein is Histidine ammonia-lyase of Shewanella pealeana (strain ATCC 700345 / ANG-SQ1).